The primary structure comprises 95 residues: Progonadoliberin-1 (95 aa).

The first 25 residues, 1–25 (MAPQTSNLWILLLLVVVMMMSQGCC), serve as a signal peptide directing secretion. Glutamine 26 is modified (pyrrolidone carboxylic acid). A Glycine amide modification is found at glycine 35.

The protein belongs to the GnRH family.

It localises to the secreted. Its function is as follows. Stimulates the secretion of gonadotropins. The protein is Progonadoliberin-1 (gnrh1) of Sparus aurata (Gilthead sea bream).